A 255-amino-acid polypeptide reads, in one-letter code: 4-hydroxy-tetrahydrodipicolinate reductase (255 aa).

Residues 9–14 (GFKGKM), aspartate 35, 89–91 (GTT), and 115–118 (APNF) contribute to the NAD(+) site. Histidine 145 acts as the Proton donor/acceptor in catalysis. (S)-2,3,4,5-tetrahydrodipicolinate is bound at residue histidine 146. The active-site Proton donor is lysine 149. 155–156 (GT) contributes to the (S)-2,3,4,5-tetrahydrodipicolinate binding site.

It belongs to the DapB family.

It is found in the cytoplasm. The catalysed reaction is (S)-2,3,4,5-tetrahydrodipicolinate + NAD(+) + H2O = (2S,4S)-4-hydroxy-2,3,4,5-tetrahydrodipicolinate + NADH + H(+). The enzyme catalyses (S)-2,3,4,5-tetrahydrodipicolinate + NADP(+) + H2O = (2S,4S)-4-hydroxy-2,3,4,5-tetrahydrodipicolinate + NADPH + H(+). Its pathway is amino-acid biosynthesis; L-lysine biosynthesis via DAP pathway; (S)-tetrahydrodipicolinate from L-aspartate: step 4/4. In terms of biological role, catalyzes the conversion of 4-hydroxy-tetrahydrodipicolinate (HTPA) to tetrahydrodipicolinate. This Streptococcus pneumoniae serotype 4 (strain ATCC BAA-334 / TIGR4) protein is 4-hydroxy-tetrahydrodipicolinate reductase.